The chain runs to 31 residues: AATAATAATAATAATAATAATAATAATAATA.

10 O-linked (GalNAc...) threonine glycosylation sites follow: Thr-3, Thr-6, Thr-9, Thr-12, Thr-15, Thr-18, Thr-21, Thr-24, Thr-27, and Thr-30.

In terms of processing, O-linked glycans consist of Gal-GalNAc disaccharides. The three proteins may differ only in the number of repeating units of -Ala-Ala-Thr-.

Its subcellular location is the secreted. Its function is as follows. Antifreeze proteins lower the blood freezing point. This fish lives in antarctic waters where it experiences water temperatures near -1.9 degrees Celsius. Its blood has a freezing point of about -2.0 degrees Celsius, and 30% of the freezing-point depression is due mainly to the 3 major high molecular weight glycoproteins in the plasma. The polypeptide is Ice-structuring glycoprotein 3 (Pagothenia borchgrevinki (Bald rockcod)).